The following is a 167-amino-acid chain: Pathogenesis-related protein PRMS (167 aa).

A signal peptide spans 1 to 27; sequence MEASNKLAVLLLWLVMAAATAVHPSYS. In terms of domain architecture, SCP spans 37–155; that stretch reads PQNSARAAVG…NRGVFIICNY (119 aa). 3 cysteine pairs are disulfide-bonded: C71–C143, C116–C122, and C138–C153.

Belongs to the CRISP family.

In terms of biological role, probably involved in the defense reaction of plants against pathogens. This chain is Pathogenesis-related protein PRMS (PRMS), found in Zea mays (Maize).